The chain runs to 149 residues: Transcriptional repressor NrdR (149 aa).

Residues 3–33 (CPFCSSEDTKVVDSRTTIDGSTKRRRECNNC) fold into a zinc finger. One can recognise an ATP-cone domain in the interval 48–138 (IYVVKKDNRR…VYKEFDDIKS (91 aa)).

This sequence belongs to the NrdR family. Zn(2+) is required as a cofactor.

Functionally, negatively regulates transcription of bacterial ribonucleotide reductase nrd genes and operons by binding to NrdR-boxes. The protein is Transcriptional repressor NrdR of Fusobacterium nucleatum subsp. nucleatum (strain ATCC 25586 / DSM 15643 / BCRC 10681 / CIP 101130 / JCM 8532 / KCTC 2640 / LMG 13131 / VPI 4355).